The primary structure comprises 274 residues: HTH-type transcriptional regulator GadX (274 aa).

In terms of domain architecture, HTH araC/xylS-type spans 145 to 242; sequence TRVCTVINNN…GMTPTEYQER (98 aa). 2 consecutive DNA-binding regions (H-T-H motif) follow at residues 162–183 and 209–232; these read ARIA…REEG and IKRV…RNYY.

As to quaternary structure, homodimer.

Functionally, positively regulates the expression of about fifteen genes involved in acid resistance such as gadA, gadB and gadC. Depending on the conditions (growth phase and medium), can repress gadW. The polypeptide is HTH-type transcriptional regulator GadX (gadX) (Escherichia coli O6:H1 (strain CFT073 / ATCC 700928 / UPEC)).